The primary structure comprises 510 residues: Hexose carrier protein HEX6 (510 aa).

Residues 1-22 (MAAGLAITSEGGQYNGRMTSFV) lie on the Cytoplasmic side of the membrane. 12 helical membrane-spanning segments follow: residues 23-43 (ALSC…IGVS), 83-103 (SFTS…SSVT), 118-128 (VFLAXAALGGA), 140-160 (VLLG…LSEM), 169-189 (INNG…LINY), 202-222 (ISLA…LFLP), 284-304 (LVMA…VIAF), 325-345 (IVTG…VDKL), 349-369 (ALFI…GSIM), 382-402 (GYAY…GWSW), 428-448 (AVSF…LCHF), and 451-471 (GIFF…HFLL). The Cytoplasmic portion of the chain corresponds to 472–510 (PETKKVPIEKMDIVWRDHWFWKKIIGEEAAEENNKMEAA).

This sequence belongs to the major facilitator superfamily. Sugar transporter (TC 2.A.1.1) family.

The protein resides in the membrane. Active uptake of hexoses. Probable glucose/hydrogen symport. This is Hexose carrier protein HEX6 (HEX6) from Ricinus communis (Castor bean).